The following is a 366-amino-acid chain: Class I histocompatibility antigen, Gogo-C*0201 alpha chain (366 aa).

A signal peptide spans 1–24 (MRVMAPRTLILPLSGALALTETWA). Residues 25–114 (GSHSMRYFYT…LRGYYNQSED (90 aa)) form an alpha-1 region. Topologically, residues 25–308 (GSHSMRYFYT…EPSSQPTIPI (284 aa)) are extracellular. Residue asparagine 110 is glycosylated (N-linked (GlcNAc...) asparagine). The segment at 115-206 (GSHTLQSMYG…ENGKETLQRA (92 aa)) is alpha-2. Intrachain disulfides connect cysteine 125-cysteine 188 and cysteine 227-cysteine 283. The interval 207-298 (EPPKTHVTHH…GLPEPLTLRW (92 aa)) is alpha-3. One can recognise an Ig-like C1-type domain in the interval 209-297 (PKTHVTHHPL…EGLPEPLTLR (89 aa)). Residues 299-308 (EPSSQPTIPI) form a connecting peptide region. The helical transmembrane segment at 309–333 (VGIVVGLAVLVVLAVLGAVVTAMMC) threads the bilayer. Over 334–366 (RRKSSGGKGGSCSQAACSNSAQGSDESLITCKA) the chain is Cytoplasmic.

The protein belongs to the MHC class I family. In terms of assembly, heterodimer of an alpha chain and a beta chain (beta-2-microglobulin).

Its subcellular location is the membrane. In terms of biological role, involved in the presentation of foreign antigens to the immune system. The chain is Class I histocompatibility antigen, Gogo-C*0201 alpha chain from Gorilla gorilla gorilla (Western lowland gorilla).